A 327-amino-acid polypeptide reads, in one-letter code: Biotin synthase (327 aa).

The Radical SAM core domain maps to Thr-52–Arg-279. Cys-67, Cys-71, and Cys-74 together coordinate [4Fe-4S] cluster. [2Fe-2S] cluster contacts are provided by Cys-111, Cys-142, Cys-202, and Arg-274.

This sequence belongs to the radical SAM superfamily. Biotin synthase family. As to quaternary structure, homodimer. [4Fe-4S] cluster is required as a cofactor. The cofactor is [2Fe-2S] cluster.

The enzyme catalyses (4R,5S)-dethiobiotin + (sulfur carrier)-SH + 2 reduced [2Fe-2S]-[ferredoxin] + 2 S-adenosyl-L-methionine = (sulfur carrier)-H + biotin + 2 5'-deoxyadenosine + 2 L-methionine + 2 oxidized [2Fe-2S]-[ferredoxin]. It participates in cofactor biosynthesis; biotin biosynthesis; biotin from 7,8-diaminononanoate: step 2/2. Catalyzes the conversion of dethiobiotin (DTB) to biotin by the insertion of a sulfur atom into dethiobiotin via a radical-based mechanism. The polypeptide is Biotin synthase (Chromobacterium violaceum (strain ATCC 12472 / DSM 30191 / JCM 1249 / CCUG 213 / NBRC 12614 / NCIMB 9131 / NCTC 9757 / MK)).